Consider the following 194-residue polypeptide: Potassium-transporting ATPase KdpC subunit (194 aa).

A helical transmembrane segment spans residues 12–34; sequence LFLLLLTGGVYPLLTTALGQWWF.

This sequence belongs to the KdpC family. In terms of assembly, the system is composed of three essential subunits: KdpA, KdpB and KdpC.

The protein localises to the cell inner membrane. Part of the high-affinity ATP-driven potassium transport (or Kdp) system, which catalyzes the hydrolysis of ATP coupled with the electrogenic transport of potassium into the cytoplasm. This subunit acts as a catalytic chaperone that increases the ATP-binding affinity of the ATP-hydrolyzing subunit KdpB by the formation of a transient KdpB/KdpC/ATP ternary complex. This chain is Potassium-transporting ATPase KdpC subunit, found in Salmonella heidelberg (strain SL476).